The sequence spans 303 residues: Putative S-adenosyl-L-methionine-dependent methyltransferase MAP_4197c (303 aa).

Residues D129 and 158–159 contribute to the S-adenosyl-L-methionine site; that span reads DL.

Belongs to the UPF0677 family.

Exhibits S-adenosyl-L-methionine-dependent methyltransferase activity. The sequence is that of Putative S-adenosyl-L-methionine-dependent methyltransferase MAP_4197c from Mycolicibacterium paratuberculosis (strain ATCC BAA-968 / K-10) (Mycobacterium paratuberculosis).